We begin with the raw amino-acid sequence, 89 residues long: Small ribosomal subunit protein uS15 (89 aa).

This sequence belongs to the universal ribosomal protein uS15 family. As to quaternary structure, part of the 30S ribosomal subunit. Forms a bridge to the 50S subunit in the 70S ribosome, contacting the 23S rRNA.

Its function is as follows. One of the primary rRNA binding proteins, it binds directly to 16S rRNA where it helps nucleate assembly of the platform of the 30S subunit by binding and bridging several RNA helices of the 16S rRNA. Functionally, forms an intersubunit bridge (bridge B4) with the 23S rRNA of the 50S subunit in the ribosome. The polypeptide is Small ribosomal subunit protein uS15 (Salmonella schwarzengrund (strain CVM19633)).